Here is a 1394-residue protein sequence, read N- to C-terminus: DNA-directed RNA polymerase subunit beta' (1394 aa).

Residues Cys71, Cys73, Cys86, and Cys89 each coordinate Zn(2+). Mg(2+)-binding residues include Asp462, Asp464, and Asp466. 4 residues coordinate Zn(2+): Cys810, Cys883, Cys890, and Cys893.

It belongs to the RNA polymerase beta' chain family. In terms of assembly, the RNAP catalytic core consists of 2 alpha, 1 beta, 1 beta' and 1 omega subunit. When a sigma factor is associated with the core the holoenzyme is formed, which can initiate transcription. Requires Mg(2+) as cofactor. Zn(2+) is required as a cofactor.

The catalysed reaction is RNA(n) + a ribonucleoside 5'-triphosphate = RNA(n+1) + diphosphate. DNA-dependent RNA polymerase catalyzes the transcription of DNA into RNA using the four ribonucleoside triphosphates as substrates. The sequence is that of DNA-directed RNA polymerase subunit beta' from Beijerinckia indica subsp. indica (strain ATCC 9039 / DSM 1715 / NCIMB 8712).